We begin with the raw amino-acid sequence, 372 residues long: Putative 8-amino-7-oxononanoate synthase (372 aa).

Arginine 20 contributes to the substrate binding site. A pyridoxal 5'-phosphate-binding site is contributed by glycine 94–tyrosine 95. Residue histidine 119 coordinates substrate. Pyridoxal 5'-phosphate contacts are provided by residues serine 167, aspartate 192–histidine 195, and threonine 223–lysine 226. N6-(pyridoxal phosphate)lysine is present on lysine 226. Residue threonine 337 participates in substrate binding.

This sequence belongs to the class-II pyridoxal-phosphate-dependent aminotransferase family. BioF subfamily. As to quaternary structure, homodimer. The cofactor is pyridoxal 5'-phosphate.

It carries out the reaction 6-carboxyhexanoyl-[ACP] + L-alanine + H(+) = (8S)-8-amino-7-oxononanoate + holo-[ACP] + CO2. The protein operates within cofactor biosynthesis; biotin biosynthesis. Its function is as follows. Catalyzes the decarboxylative condensation of pimeloyl-[acyl-carrier protein] and L-alanine to produce 8-amino-7-oxononanoate (AON), [acyl-carrier protein], and carbon dioxide. This Methanocaldococcus jannaschii (strain ATCC 43067 / DSM 2661 / JAL-1 / JCM 10045 / NBRC 100440) (Methanococcus jannaschii) protein is Putative 8-amino-7-oxononanoate synthase (bioF).